A 170-amino-acid polypeptide reads, in one-letter code: Lipoprotein signal peptidase (170 aa).

Transmembrane regions (helical) follow at residues 9–29 (FNIF…KYLV), 72–92 (IFFL…SLKE), and 96–118 (IARI…RLFR). Residues aspartate 124 and aspartate 146 contribute to the active site. A helical transmembrane segment spans residues 143 to 163 (NFADSYVVIGMILFLVYDFFI).

The protein belongs to the peptidase A8 family.

Its subcellular location is the cell inner membrane. The catalysed reaction is Release of signal peptides from bacterial membrane prolipoproteins. Hydrolyzes -Xaa-Yaa-Zaa-|-(S,diacylglyceryl)Cys-, in which Xaa is hydrophobic (preferably Leu), and Yaa (Ala or Ser) and Zaa (Gly or Ala) have small, neutral side chains.. The protein operates within protein modification; lipoprotein biosynthesis (signal peptide cleavage). In terms of biological role, this protein specifically catalyzes the removal of signal peptides from prolipoproteins. This chain is Lipoprotein signal peptidase, found in Borreliella afzelii (strain PKo) (Borrelia afzelii).